A 243-amino-acid polypeptide reads, in one-letter code: Anti-H(O) lectin 2 (243 aa).

An N-linked (GlcNAc...) asparagine glycan is attached at asparagine 115. Positions 127 and 129 each coordinate Mn(2+). Residues aspartate 129, asparagine 136, and aspartate 139 each contribute to the Ca(2+) site. 2 residues coordinate Mn(2+): aspartate 139 and histidine 144.

This sequence belongs to the leguminous lectin family. As to quaternary structure, homodimer.

Lactose- or galactose-binding anti-H(O) lectin. The sequence is that of Anti-H(O) lectin 2 from Cytisophyllum sessilifolium (Sessile-leaved cytisus).